Reading from the N-terminus, the 456-residue chain is Phospholipase A1 member A (456 aa).

The N-terminal stretch at 1–25 (MPPGPWESCFWVGGLLLWLSVGSSG) is a signal peptide. Serine 166 acts as the Nucleophile in catalysis. The active-site Charge relay system is aspartate 190. The cysteines at positions 245 and 258 are disulfide-linked. Catalysis depends on histidine 260, which acts as the Charge relay system. Intrachain disulfides connect cysteine 282–cysteine 293 and cysteine 296–cysteine 304. N-linked (GlcNAc...) asparagine glycosylation occurs at asparagine 365.

The protein belongs to the AB hydrolase superfamily. Lipase family.

The protein localises to the secreted. The catalysed reaction is a 1,2-diacyl-sn-glycero-3-phospho-L-serine + H2O = a 2-acyl-sn-glycero-3-phospho-L-serine + a fatty acid + H(+). It carries out the reaction 1,2-di-(9Z)-octadecenoyl-sn-glycero-3-phospho-L-serine + H2O = 2-(9Z-octadecenoyl)-sn-glycero-3-phospho-L-serine + (9Z)-octadecenoate + H(+). It catalyses the reaction 1-hexadecanoyl-2-(5Z,8Z,11Z,14Z-eicosatetraenoyl)-sn-glycero-3-phospho-L-serine + H2O = 2-(5Z,8Z,11Z,14Z)-eicosatetraenoyl-sn-glycero-3-phospho-L-serine + hexadecanoate + H(+). The enzyme catalyses a 1-acyl-sn-glycero-3-phospho-L-serine + H2O = sn-glycero-3-phospho-L-serine + a fatty acid + H(+). The catalysed reaction is 1-(9Z-octadecenoyl)-sn-glycero-3-phospho-L-serine + H2O = sn-glycero-3-phospho-L-serine + (9Z)-octadecenoate + H(+). Its function is as follows. Hydrolyzes the ester bond of the acyl group attached at the sn-1 position of phosphatidylserines (phospholipase A1 activity) and 1-acyl-2-lysophosphatidylserines (lysophospholipase activity) in the pathway of phosphatidylserines acyl chain remodeling. Cleaves phosphatidylserines exposed on the outer leaflet of the plasma membrane of apoptotic cells producing 2-acyl-1-lysophosphatidylserines, which in turn enhance mast cell activation and histamine production. Has no activity toward other glycerophospholipids including phosphatidylcholines, phosphatidylethanolamines, phosphatidic acids or phosphatidylinositols, or glycerolipids such as triolein. The protein is Phospholipase A1 member A (PLA1A) of Pongo abelii (Sumatran orangutan).